Reading from the N-terminus, the 159-residue chain is Large ribosomal subunit protein uL10 (159 aa).

Belongs to the universal ribosomal protein uL10 family. In terms of assembly, part of the ribosomal stalk of the 50S ribosomal subunit. The N-terminus interacts with L11 and the large rRNA to form the base of the stalk. The C-terminus forms an elongated spine to which L12 dimers bind in a sequential fashion forming a multimeric L10(L12)X complex.

In terms of biological role, forms part of the ribosomal stalk, playing a central role in the interaction of the ribosome with GTP-bound translation factors. This is Large ribosomal subunit protein uL10 from Nautilia profundicola (strain ATCC BAA-1463 / DSM 18972 / AmH).